We begin with the raw amino-acid sequence, 369 residues long: Putative transport protein YueF (369 aa).

8 consecutive transmembrane segments (helical) span residues 13–33 (ILFV…FQPF), 34–54 (IVFI…YFIF), 73–93 (LIYL…GPII), 159–179 (AVFG…FILF), 213–233 (DTLA…GTAC), 234–254 (FIGY…VMAI), 271–291 (VIVG…VVVI), and 316–336 (IILL…ILAV).

This sequence belongs to the autoinducer-2 exporter (AI-2E) (TC 2.A.86) family.

It localises to the cell membrane. This is Putative transport protein YueF (yueF) from Bacillus subtilis (strain 168).